The sequence spans 282 residues: Shikimate dehydrogenase (NADP(+)) (282 aa).

Residues 15-17 and threonine 62 contribute to the shikimate site; that span reads SKS. Lysine 66 functions as the Proton acceptor in the catalytic mechanism. Asparagine 87 and aspartate 103 together coordinate shikimate. NADP(+) contacts are provided by residues 128-132, 152-157, and methionine 216; these read GAGGA and NRTPAK. A shikimate-binding site is contributed by tyrosine 218. Position 240 (glycine 240) interacts with NADP(+).

This sequence belongs to the shikimate dehydrogenase family. In terms of assembly, homodimer.

It carries out the reaction shikimate + NADP(+) = 3-dehydroshikimate + NADPH + H(+). Its pathway is metabolic intermediate biosynthesis; chorismate biosynthesis; chorismate from D-erythrose 4-phosphate and phosphoenolpyruvate: step 4/7. Involved in the biosynthesis of the chorismate, which leads to the biosynthesis of aromatic amino acids. Catalyzes the reversible NADPH linked reduction of 3-dehydroshikimate (DHSA) to yield shikimate (SA). The chain is Shikimate dehydrogenase (NADP(+)) from Nitrosococcus oceani (strain ATCC 19707 / BCRC 17464 / JCM 30415 / NCIMB 11848 / C-107).